Reading from the N-terminus, the 230-residue chain is Thioredoxin domain-containing protein PLP3B (230 aa).

The region spanning 89–173 is the Thioredoxin domain; that stretch reads VSEGDFLGEV…GIAMDRLVGF (85 aa). A disordered region spans residues 199–230; it reads EKRKEEDEEDYEYQESIRRSVRSSANVDSDSD. Positions 220 to 230 are enriched in polar residues; sequence RSSANVDSDSD.

The protein belongs to the phosducin family. As to quaternary structure, interacts with TUBB2, TUBB3, TUBB4 and TUBB5. In terms of tissue distribution, expressed in roots, cotyledons, leaves, stems and flowers.

The protein resides in the cytoplasm. It is found in the nucleus. Its function is as follows. Tubulin-binding protein involved in microtubule formation. The sequence is that of Thioredoxin domain-containing protein PLP3B (PLP3B) from Arabidopsis thaliana (Mouse-ear cress).